The sequence spans 131 residues: Large ribosomal subunit protein eL32 (131 aa).

Belongs to the eukaryotic ribosomal protein eL32 family.

This chain is Large ribosomal subunit protein eL32 (rpl32e), found in Sulfurisphaera tokodaii (strain DSM 16993 / JCM 10545 / NBRC 100140 / 7) (Sulfolobus tokodaii).